Reading from the N-terminus, the 264-residue chain is Outer kinetochore KNL1 complex subunit sos7 (264 aa).

Residues 90-236 (EAEDNEKLET…SNQIKAAIHT (147 aa)) are a coiled coil.

It belongs to the KRE28 family. As to quaternary structure, component of the KNL1/SPC105 complex composed of at least spc7 and sos7. Part of the outer kinetochore KMN network that includes the KNL1, MIS12 and NDC80 complexes. Interacts (via C-terminus) with spc7 (via C-terminus); the interaction is direct.

The protein resides in the nucleus. Its subcellular location is the chromosome. The protein localises to the centromere. It localises to the kinetochore. Functionally, acts as a component of the outer kinetochore KNL1 complex that facilitates microtubule-kinetochore interactions and the spindle assembly checkpoint. Kinetochores, consisting of a centromere-associated inner segment and a microtubule-contacting outer segment, play a crucial role in chromosome segregation by mediating the physical connection between centromeric DNA and spindle microtubules. The outer kinetochore is made up of the ten-subunit KMN network, comprising the MIS12, NDC80 and KNL1 complexes, and auxiliary microtubule-associated components; together they connect the outer kinetochore with the inner kinetochore, bind microtubules, and mediate interactions with mitotic checkpoint proteins that delay anaphase until chromosomes are bioriented on the spindle. The polypeptide is Outer kinetochore KNL1 complex subunit sos7 (sos7) (Schizosaccharomyces pombe (strain 972 / ATCC 24843) (Fission yeast)).